Here is a 208-residue protein sequence, read N- to C-terminus: Proheparin-binding EGF-like growth factor (208 aa).

The signal sequence occupies residues M1–G23. The propeptide occupies E24–Q62. At E24–T160 the chain is on the extracellular side. The disordered stretch occupies residues A82–K103. The O-linked (GalNAc...) threonine glycan is linked to T85. A compositionally biased stretch (basic residues) spans N91–G102. The EGF-like domain maps to K104 to H144. 3 cysteine pairs are disulfide-bonded: C108-C121, C116-C132, and C134-C143. A propeptide spans P149–H208 (C-terminal). The chain crosses the membrane as a helical span at residues T161–F184. The Cytoplasmic portion of the chain corresponds to R185–H208.

In terms of assembly, interacts with FBLN1. Interacts with EGFR and ERBB4. O-glycosylated. In terms of tissue distribution, most abundant in skeletal muscle, lung, spleen brain and heart.

The protein localises to the secreted. The protein resides in the extracellular space. It is found in the cell membrane. Growth factor that mediates its effects via EGFR, ERBB2 and ERBB4. Required for normal cardiac valve formation and normal heart function. Promotes smooth muscle cell proliferation. May be involved in macrophage-mediated cellular proliferation. It is mitogenic for fibroblasts, but not endothelial cells. It is able to bind EGF receptor/EGFR with higher affinity than EGF itself and is a far more potent mitogen for smooth muscle cells than EGF. Also acts as a diphtheria toxin receptor. In Rattus norvegicus (Rat), this protein is Proheparin-binding EGF-like growth factor (Hbegf).